The primary structure comprises 154 residues: SsrA-binding protein (154 aa).

The protein belongs to the SmpB family.

It is found in the cytoplasm. In terms of biological role, required for rescue of stalled ribosomes mediated by trans-translation. Binds to transfer-messenger RNA (tmRNA), required for stable association of tmRNA with ribosomes. tmRNA and SmpB together mimic tRNA shape, replacing the anticodon stem-loop with SmpB. tmRNA is encoded by the ssrA gene; the 2 termini fold to resemble tRNA(Ala) and it encodes a 'tag peptide', a short internal open reading frame. During trans-translation Ala-aminoacylated tmRNA acts like a tRNA, entering the A-site of stalled ribosomes, displacing the stalled mRNA. The ribosome then switches to translate the ORF on the tmRNA; the nascent peptide is terminated with the 'tag peptide' encoded by the tmRNA and targeted for degradation. The ribosome is freed to recommence translation, which seems to be the essential function of trans-translation. The polypeptide is SsrA-binding protein (Ruminiclostridium cellulolyticum (strain ATCC 35319 / DSM 5812 / JCM 6584 / H10) (Clostridium cellulolyticum)).